Consider the following 207-residue polypeptide: MLNKLSRLLEQAGISLTDHQKNQLVAYVDMLNKWNKAYNLTSVRDPNEMLIRHILDSIVVAPHLRGERFIDVGTGPGLPGIPLSIVRPECHFTLLDSLGKRVRFLRQVQHELKLENIEPVQSRVEAFPSEPPFDGVISRAFASLNDMVSWCKHLPAQDGRFYALKGLVPDDEIAQLPEGYSVESIAKLQVPQLEGERHLVVIKPNHF.

Residues G73, L78, 124-125, and R139 contribute to the S-adenosyl-L-methionine site; that span reads VE.

The protein belongs to the methyltransferase superfamily. RNA methyltransferase RsmG family.

Its subcellular location is the cytoplasm. The catalysed reaction is guanosine(527) in 16S rRNA + S-adenosyl-L-methionine = N(7)-methylguanosine(527) in 16S rRNA + S-adenosyl-L-homocysteine. Its function is as follows. Specifically methylates the N7 position of guanine in position 527 of 16S rRNA. The protein is Ribosomal RNA small subunit methyltransferase G of Enterobacter sp. (strain 638).